We begin with the raw amino-acid sequence, 247 residues long: Phosphate import ATP-binding protein PstB (247 aa).

An ABC transporter domain is found at 2-242 (CRDVNVYYGE…PRHPLTEDYI (241 aa)). 32–39 (GPSGCGKS) serves as a coordination point for ATP.

This sequence belongs to the ABC transporter superfamily. Phosphate importer (TC 3.A.1.7) family. As to quaternary structure, the complex is composed of two ATP-binding proteins (PstB), two transmembrane proteins (PstC and PstA) and a solute-binding protein (PstS).

It localises to the cell inner membrane. The catalysed reaction is phosphate(out) + ATP + H2O = ADP + 2 phosphate(in) + H(+). Its function is as follows. Part of the ABC transporter complex PstSACB involved in phosphate import. Responsible for energy coupling to the transport system. The chain is Phosphate import ATP-binding protein PstB from Methylococcus capsulatus (strain ATCC 33009 / NCIMB 11132 / Bath).